Here is a 295-residue protein sequence, read N- to C-terminus: MEHFRNIGIIGRLGSTQVVDTIRRLKRFLLDRHLHVILDEGIAELLPGHGLQVSSRKQLGEVCDMVVVVGGDGSMLGAARALARYKVPVLGINRGSLGFLTDIRPDELETRVAEVLDGQYTVESRFLLETQVRRKLEPIGQGDALNDVVLHPGKSTRMIEFELYIDGQFVCSQKSDGLIVSTPTGSTAYALSAGGPIMHPKLDAIVIVPMYPHTLSSRPIVVAGNSELKIVVSPKMDIYPQVSCDGQNHFTCSPGDIVTISKKPQRLQLIHPLDHNYYEVCRTKLGWGSRLGGGS.

Aspartate 72 functions as the Proton acceptor in the catalytic mechanism. NAD(+)-binding positions include 72 to 73 (DG), 146 to 147 (ND), arginine 157, lysine 174, aspartate 176, 187 to 192 (TAYALS), and glutamine 247.

The protein belongs to the NAD kinase family. It depends on a divalent metal cation as a cofactor.

It localises to the cytoplasm. It catalyses the reaction NAD(+) + ATP = ADP + NADP(+) + H(+). Its function is as follows. Involved in the regulation of the intracellular balance of NAD and NADP, and is a key enzyme in the biosynthesis of NADP. Catalyzes specifically the phosphorylation on 2'-hydroxyl of the adenosine moiety of NAD to yield NADP. The polypeptide is NAD kinase (Azotobacter vinelandii (strain DJ / ATCC BAA-1303)).